We begin with the raw amino-acid sequence, 98 residues long: Pore-forming peptide amoebapore A (98 aa).

The N-terminal stretch at 1-21 (MKAIVFVLIFAVAFAVTATHQ) is a signal peptide. Residues 22–98 (GEILCNLCTG…NAICAKIHAC (77 aa)) enclose the Saposin B-type domain. 3 cysteine pairs are disulfide-bonded: cysteine 26–cysteine 98, cysteine 29–cysteine 92, and cysteine 56–cysteine 67.

In terms of assembly, monomer (at pH below 4 and pH above 6). Homodimer (at pH 4-6). Hexamer; formed during insertion in the membrane.

It is found in the cytoplasmic granule. Its function is as follows. Forms pores in the cell membrane of host cells. Has antibacterial activity against M.luteus, no activity against E.coli. Implicated in the cytolytic activity of the parasite. This Entamoeba histolytica (strain ATCC 30459 / HM-1:IMSS / ABRM) protein is Pore-forming peptide amoebapore A.